The chain runs to 550 residues: Arginine--tRNA ligase (550 aa).

The short motif at 130 to 140 (ANPTGPIHIGG) is the 'HIGH' region element.

It belongs to the class-I aminoacyl-tRNA synthetase family. Monomer.

It is found in the cytoplasm. It catalyses the reaction tRNA(Arg) + L-arginine + ATP = L-arginyl-tRNA(Arg) + AMP + diphosphate. The polypeptide is Arginine--tRNA ligase (argS) (Mycolicibacterium smegmatis (strain ATCC 700084 / mc(2)155) (Mycobacterium smegmatis)).